Here is a 134-residue protein sequence, read N- to C-terminus: kinetoplast-associated protein 3 (134 aa).

The propeptide occupies 1–10; the sequence is MLRRSPTLLR. The span at 106–124 shows a compositional bias: low complexity; the sequence is PKAPKAAKSASSKVKTAAK. Residues 106–134 are disordered; it reads PKAPKAAKSASSKVKTAAKTAKKTTAARK. Residues 125 to 134 show a composition bias toward basic residues; the sequence is TAKKTTAARK.

The protein belongs to the KAP family. As to quaternary structure, associates with the kinetoplast DNA network.

The protein localises to the mitochondrion matrix. It localises to the kinetoplast. Functionally, histone H1-like DNA-binding protein involved in the organization and segregation of kinetoplast DNA (kDNA). The mitochondrial DNA of kinetoplastid protozoa consists of about 5,000 minicircles and 20 to 30 maxicircles. These circular DNAs are held together by catenation into a highly organized compact disk structure referred to as a kinetoplast DNA (kDNA) network. Binds preferentially to a specific fragment of minicircle DNA and is able to compact kDNA networks through DNA charge neutralization and condensation. The sequence is that of kinetoplast-associated protein 3 (KAP3) from Crithidia fasciculata.